We begin with the raw amino-acid sequence, 193 residues long: Zinc finger protein AZF3 (193 aa).

2 consecutive C2H2-type zinc fingers follow at residues 75–97 (YKCG…KASH) and 118–140 (HVCS…KRCH).

In terms of tissue distribution, expressed in roots.

Its subcellular location is the nucleus. In terms of biological role, transcriptional repressor probably involved in abiotic stress responses. Binds DNA in a sequence-specific manner and can repress the transactivation activity of other transcription factors. In Arabidopsis thaliana (Mouse-ear cress), this protein is Zinc finger protein AZF3 (AZF3).